Here is a 338-residue protein sequence, read N- to C-terminus: Large ribosomal subunit protein uL3 (338 aa).

The tract at residues 230–253 is disordered; that stretch reads HRKGHRRTGTIGPQAPALMFTQPR.

It belongs to the universal ribosomal protein uL3 family. As to quaternary structure, part of the 50S ribosomal subunit. Forms a cluster with proteins L14 and L24e.

Its function is as follows. One of the primary rRNA binding proteins, it binds directly near the 3'-end of the 23S rRNA, where it nucleates assembly of the 50S subunit. The chain is Large ribosomal subunit protein uL3 from Pyrobaculum neutrophilum (strain DSM 2338 / JCM 9278 / NBRC 100436 / V24Sta) (Thermoproteus neutrophilus).